Reading from the N-terminus, the 1406-residue chain is DNA-directed RNA polymerase subunit beta' (1406 aa).

Residues C70, C72, C85, and C88 each contribute to the Zn(2+) site. Residues D460, D462, and D464 each contribute to the Mg(2+) site. Zn(2+)-binding residues include C814, C889, C896, and C899.

Belongs to the RNA polymerase beta' chain family. The RNAP catalytic core consists of 2 alpha, 1 beta, 1 beta' and 1 omega subunit. When a sigma factor is associated with the core the holoenzyme is formed, which can initiate transcription. Mg(2+) serves as cofactor. Zn(2+) is required as a cofactor.

It carries out the reaction RNA(n) + a ribonucleoside 5'-triphosphate = RNA(n+1) + diphosphate. DNA-dependent RNA polymerase catalyzes the transcription of DNA into RNA using the four ribonucleoside triphosphates as substrates. The chain is DNA-directed RNA polymerase subunit beta' from Stenotrophomonas maltophilia (strain K279a).